A 1146-amino-acid chain; its full sequence is Ankyrin repeat domain-containing protein 24 (1146 aa).

ANK repeat units follow at residues 81 to 110 (EGKS…NVMS), 114 to 143 (AGYN…VVDV), 147 to 176 (SGWT…HLNP), 180 to 209 (SGAT…AAND), and 213 to 242 (QGRT…QPGI). Disordered stretches follow at residues 272-320 (RPSP…PDDR), 607-627 (REME…GAQA), and 766-785 (ERVR…GDTT). Positions 286 to 297 (EASSQNSMSSHG) are enriched in polar residues. Positions 320–517 (RDAYEEIVRL…QALRQQETRE (198 aa)) form a coiled coil. A coiled-coil region spans residues 714-1110 (AAEASEKLQV…AARDHSSVVA (397 aa)).

As to quaternary structure, homodimer. Interacts (via C-terminal domain) with TRIOBP (via C-terminal domain) isoform 4; recruits TRIOBP isoform 4 to stereocilia rootlets.

It is found in the cell membrane. The protein localises to the cell projection. The protein resides in the stereocilium. Component of the stereocilia rootlet in hair cells of inner ear. Bridges the apical plasma membrane with the lower rootlet and maintains normal distribution of TRIOBP, thereby reinforcing stereocilia insertion points and organizing rootlets for hearing with long-term resilience. In Homo sapiens (Human), this protein is Ankyrin repeat domain-containing protein 24.